We begin with the raw amino-acid sequence, 163 residues long: PTS system fructose-specific EIIB component (163 aa).

One can recognise a PTS EIIB type-4 domain in the interval 1 to 163; that stretch reads MMNIVLARID…FVQILRNVTK (163 aa). The active-site Pros-phosphohistidine intermediate is the H15. At H15 the chain carries Phosphohistidine; by EIIA.

It is found in the cytoplasm. It catalyses the reaction D-fructose(out) + N(pros)-phospho-L-histidyl-[protein] = D-fructose 1-phosphate(in) + L-histidyl-[protein]. In terms of biological role, the phosphoenolpyruvate-dependent sugar phosphotransferase system (sugar PTS), a major carbohydrate active -transport system, catalyzes the phosphorylation of incoming sugar substrates concomitantly with their translocation across the cell membrane. The enzyme II LevDE PTS system is involved in fructose transport. Its function is as follows. LevD and LevE act as negative regulators of the levanase operon. They may be involved in a PTS-mediated phosphorylation of a regulator. The sequence is that of PTS system fructose-specific EIIB component from Bacillus subtilis (strain 168).